The following is a 363-amino-acid chain: DNA replication and repair protein RecF (363 aa).

Gly-30–Thr-37 is an ATP binding site.

It belongs to the RecF family.

The protein resides in the cytoplasm. In terms of biological role, the RecF protein is involved in DNA metabolism; it is required for DNA replication and normal SOS inducibility. RecF binds preferentially to single-stranded, linear DNA. It also seems to bind ATP. This Chlorobium phaeobacteroides (strain BS1) protein is DNA replication and repair protein RecF.